The chain runs to 810 residues: Nuclear pore complex protein NUP88 (810 aa).

The interval 1–23 is disordered; that stretch reads MKFNFNETEDAPDSRRSPTPKEP. A coiled-coil region spans residues 646 to 748; it reads APNLKRIIDD…RARVKKSTQK (103 aa).

In terms of assembly, part of the nuclear pore complex (NPC). The NPC has an eight-fold symmetrical structure comprising a central transport channel and two rings, the cytoplasmic and nuclear rings, to which eight filaments are attached. The cytoplasmic filaments have loose ends, while the nuclear filaments are joined in a distal ring, forming a nuclear basket. NPCs are highly dynamic in configuration and composition, and can be devided in 3 subcomplexes, the NUP62 subcomplex, the NUP107-160 subcomplex and the NUP93 subcomplex, containing approximately 30 different nucleoporin proteins.

Its subcellular location is the nucleus envelope. It is found in the nucleus. The protein resides in the nuclear pore complex. In terms of biological role, involved in the regulation of exportin-mediated nuclear protein export. Required for resistance mediated by multiple R proteins and for the appropriate nuclear accumulation of SNC1 and of the downstream defense signaling components EDS1 and NPR1. Not involved in salt tolerance, ethylene and auxin responses, but required for systemic acquired resistance. This Arabidopsis thaliana (Mouse-ear cress) protein is Nuclear pore complex protein NUP88.